A 375-amino-acid chain; its full sequence is Alcohol dehydrogenase 1A (375 aa).

S2 carries the N-acetylserine modification. Residue S23 is modified to Phosphoserine. Residue Y35 is modified to Phosphotyrosine. C47 is a Zn(2+) binding site. Residue 48-52 (GTDDH) participates in NAD(+) binding. Residues H68, C98, C101, C104, C112, and C175 each coordinate Zn(2+). NAD(+) contacts are provided by residues 200–205 (GLGGVG), D224, K229, I270, 293–295 (VGV), 318–320 (AVY), and R370.

It belongs to the zinc-containing alcohol dehydrogenase family. As to quaternary structure, dimer of identical or heterodimer of closely related subunits alpha, beta, or gamma that are encoded by genes ADH1A, ADH1B, and ADH1C, respectively. Requires Zn(2+) as cofactor.

The protein resides in the cytoplasm. The catalysed reaction is a primary alcohol + NAD(+) = an aldehyde + NADH + H(+). It catalyses the reaction a secondary alcohol + NAD(+) = a ketone + NADH + H(+). The enzyme catalyses butan-1-ol + NAD(+) = butanal + NADH + H(+). It carries out the reaction 1-propanol + NAD(+) = propanal + NADH + H(+). The catalysed reaction is propan-2-ol + NAD(+) = acetone + NADH + H(+). Its function is as follows. Alcohol dehydrogenase. Oxidizes primary as well as secondary alcohols. Ethanol is a very poor substrate. This Macaca mulatta (Rhesus macaque) protein is Alcohol dehydrogenase 1A (ADH1A).